A 1027-amino-acid chain; its full sequence is Cysteine-rich motor neuron 1 protein (1027 aa).

Residues 1–28 (MASSRMYLLVKCMLILQLMVLIAKNSRA) form the signal peptide. Residues 29-106 (LICLPCDKSK…QYEVGNCEDE (78 aa)) enclose the IGFBP N-terminal domain. Topologically, residues 29–931 (LICLPCDKSK…PLPSEDAGLH (903 aa)) are extracellular. 4 disulfides stabilise this stretch: Cys31–Cys54, Cys34–Cys56, Cys39–Cys57, and Cys45–Cys60. N-linked (GlcNAc...) asparagine glycosylation occurs at Asn65. Intrachain disulfides connect Cys68-Cys84 and Cys78-Cys103. Positions 308 to 310 (RGD) match the Cell attachment site motif. N-linked (GlcNAc...) asparagine glycosylation is present at Asn324. 2 consecutive VWFC domains span residues 328–385 (PACT…PVCE) and 395–451 (AGCY…PVCE). 4 consecutive Antistasin-like domains span residues 463–492 (CGSL…TCAC), 499–526 (CGGL…VCQC), 533–558 (CKAV…TCRC), and 561–586 (CPEL…ICQC). The N-linked (GlcNAc...) asparagine glycan is linked to Asn468. 2 consecutive VWFC domains span residues 601–658 (GSCL…PTCP) and 672–730 (SVCL…PHCP). Asn741 is a glycosylation site (N-linked (GlcNAc...) asparagine). 2 consecutive VWFC domains span residues 746–804 (SYCR…PYCL) and 810–867 (AVCH…PMCP). The disordered stretch occupies residues 877 to 897 (IEKTDQRGDKSRHQPAWPTHS). Over residues 878-888 (EKTDQRGDKSR) the composition is skewed to basic and acidic residues. The Cell attachment site signature appears at 883–885 (RGD). The chain crosses the membrane as a helical span at residues 932-952 (WAWVALPVLMMMLTLAALLLV). Over 953–1027 (NQRKQWIPVP…LQADNFYQTA (75 aa)) the chain is Cytoplasmic.

The protein resides in the membrane. Functionally, may play a role in CNS development by interacting with growth factors implicated in motor neuron differentiation and survival. The protein is Cysteine-rich motor neuron 1 protein (crim1) of Danio rerio (Zebrafish).